The chain runs to 480 residues: Protein nucleotidyltransferase YdiU (480 aa).

ATP contacts are provided by Gly86, Gly88, Arg89, Lys109, Asp121, Gly122, Arg172, and Arg179. Catalysis depends on Asp248, which acts as the Proton acceptor. Residues Asn249 and Asp258 each contribute to the Mg(2+) site. Position 258 (Asp258) interacts with ATP.

This sequence belongs to the SELO family. Requires Mg(2+) as cofactor. Mn(2+) is required as a cofactor.

It catalyses the reaction L-seryl-[protein] + ATP = 3-O-(5'-adenylyl)-L-seryl-[protein] + diphosphate. The catalysed reaction is L-threonyl-[protein] + ATP = 3-O-(5'-adenylyl)-L-threonyl-[protein] + diphosphate. It carries out the reaction L-tyrosyl-[protein] + ATP = O-(5'-adenylyl)-L-tyrosyl-[protein] + diphosphate. The enzyme catalyses L-histidyl-[protein] + UTP = N(tele)-(5'-uridylyl)-L-histidyl-[protein] + diphosphate. It catalyses the reaction L-seryl-[protein] + UTP = O-(5'-uridylyl)-L-seryl-[protein] + diphosphate. The catalysed reaction is L-tyrosyl-[protein] + UTP = O-(5'-uridylyl)-L-tyrosyl-[protein] + diphosphate. Functionally, nucleotidyltransferase involved in the post-translational modification of proteins. It can catalyze the addition of adenosine monophosphate (AMP) or uridine monophosphate (UMP) to a protein, resulting in modifications known as AMPylation and UMPylation. This chain is Protein nucleotidyltransferase YdiU, found in Salmonella newport (strain SL254).